The sequence spans 266 residues: Hydroxyethylthiazole kinase (266 aa).

Position 43 (Met43) interacts with substrate. Arg119 and Thr166 together coordinate ATP. Gly193 is a binding site for substrate.

It belongs to the Thz kinase family. Requires Mg(2+) as cofactor.

It catalyses the reaction 5-(2-hydroxyethyl)-4-methylthiazole + ATP = 4-methyl-5-(2-phosphooxyethyl)-thiazole + ADP + H(+). It participates in cofactor biosynthesis; thiamine diphosphate biosynthesis; 4-methyl-5-(2-phosphoethyl)-thiazole from 5-(2-hydroxyethyl)-4-methylthiazole: step 1/1. In terms of biological role, catalyzes the phosphorylation of the hydroxyl group of 4-methyl-5-beta-hydroxyethylthiazole (THZ). The polypeptide is Hydroxyethylthiazole kinase (Methanococcus maripaludis (strain C6 / ATCC BAA-1332)).